The chain runs to 463 residues: Glutamate--tRNA ligase 2 (463 aa).

Residues 10-20 carry the 'HIGH' region motif; that stretch reads PSPTGFLHIGS. The 'KMSKS' region signature appears at 239–243; the sequence is KLSKR. Residue Lys242 participates in ATP binding.

Belongs to the class-I aminoacyl-tRNA synthetase family. Glutamate--tRNA ligase type 1 subfamily. In terms of assembly, monomer.

It localises to the cytoplasm. It carries out the reaction tRNA(Glu) + L-glutamate + ATP = L-glutamyl-tRNA(Glu) + AMP + diphosphate. In terms of biological role, catalyzes the attachment of glutamate to tRNA(Glu) in a two-step reaction: glutamate is first activated by ATP to form Glu-AMP and then transferred to the acceptor end of tRNA(Glu). The chain is Glutamate--tRNA ligase 2 from Rickettsia felis (strain ATCC VR-1525 / URRWXCal2) (Rickettsia azadi).